The chain runs to 356 residues: Guanine nucleotide-binding protein alpha-2 subunit (356 aa).

A lipid anchor (N-myristoyl glycine) is attached at Gly2. Cys4 is lipidated: S-palmitoyl cysteine. Positions 32-356 constitute a G-alpha domain; that stretch reads RTVKLLLLGA…QSNLHKSGLY (325 aa). The tract at residues 35-48 is G1 motif; sequence KLLLLGAGECGKST. GTP is bound by residues Glu43, Gly45, Lys46, Ser47, Thr48, Asp153, Leu178, Thr184, Gly206, Asn272, Lys273, Asp275, and Ala328. Ser47 lines the Mg(2+) pocket. The segment at 176 to 184 is G2 motif; sequence DTLLLRTKT. Thr184 serves as a coordination point for Mg(2+). The interval 199 to 208 is G3 motif; sequence FRVFDVGGQR. Positions 268-275 are G4 motif; sequence ILFLNKKD. Positions 326-331 are G5 motif; that stretch reads TCATDT.

It belongs to the G-alpha family. G(q) subfamily. As to quaternary structure, g proteins are composed of 3 units; alpha, beta and gamma. The alpha chain contains the guanine nucleotide binding site. Mg(2+) is required as a cofactor.

Functionally, guanine nucleotide-binding proteins (G proteins) are involved as modulators or transducers in various transmembrane signaling systems. Involved in behavioral responses to P.aeruginosa by controlling the expression of daf-7, a member of the TGF-beta family, in ASJ sensory neurons. The protein is Guanine nucleotide-binding protein alpha-2 subunit (gpa-2) of Caenorhabditis elegans.